The following is a 529-amino-acid chain: Bifunctional purine biosynthesis protein PurH (529 aa).

Residues 1-148 form the MGS-like domain; it reads MQQRRPVRRA…KNHRDVAIVV (148 aa). Lysine 287 carries the N6-acetyllysine modification.

The protein belongs to the PurH family.

It carries out the reaction (6R)-10-formyltetrahydrofolate + 5-amino-1-(5-phospho-beta-D-ribosyl)imidazole-4-carboxamide = 5-formamido-1-(5-phospho-D-ribosyl)imidazole-4-carboxamide + (6S)-5,6,7,8-tetrahydrofolate. The catalysed reaction is IMP + H2O = 5-formamido-1-(5-phospho-D-ribosyl)imidazole-4-carboxamide. Its pathway is purine metabolism; IMP biosynthesis via de novo pathway; 5-formamido-1-(5-phospho-D-ribosyl)imidazole-4-carboxamide from 5-amino-1-(5-phospho-D-ribosyl)imidazole-4-carboxamide (10-formyl THF route): step 1/1. The protein operates within purine metabolism; IMP biosynthesis via de novo pathway; IMP from 5-formamido-1-(5-phospho-D-ribosyl)imidazole-4-carboxamide: step 1/1. This is Bifunctional purine biosynthesis protein PurH from Escherichia coli O6:K15:H31 (strain 536 / UPEC).